Reading from the N-terminus, the 447-residue chain is Omega-3 fatty acid desaturase, chloroplastic (447 aa).

A Histidine box-1 motif is present at residues 167 to 171; that stretch reads HDCGH. Positions 203–207 match the Histidine box-2 motif; it reads HRTHH. A Histidine box-3 motif is present at residues 370-374; that stretch reads HVIHH.

The protein belongs to the fatty acid desaturase type 1 family.

The protein localises to the plastid. Its subcellular location is the chloroplast membrane. It participates in lipid metabolism; polyunsaturated fatty acid biosynthesis. Chloroplast omega-3 fatty acid desaturase introduces the third double bond in the biosynthesis of 16:3 and 18:3 fatty acids, important constituents of plant membranes. It is thought to use ferredoxin as an electron donor and to act on fatty acids esterified to galactolipids, sulfolipids and phosphatidylglycerol. This is Omega-3 fatty acid desaturase, chloroplastic (FAD7) from Sesamum indicum (Oriental sesame).